We begin with the raw amino-acid sequence, 398 residues long: Ribosomal RNA large subunit methyltransferase F (398 aa).

Residues 1 to 12 (MTPSRKPARPGA) show a composition bias toward basic residues. Positions 1–85 (MTPSRKPARP…RNLHGQGYDF (85 aa)) are disordered. 2 stretches are compositionally biased toward low complexity: residues 20–40 (PSAK…AQPK) and 48–59 (QAKSQAKPQAKS).

The protein belongs to the methyltransferase superfamily. METTL16/RlmF family.

It is found in the cytoplasm. It carries out the reaction adenosine(1618) in 23S rRNA + S-adenosyl-L-methionine = N(6)-methyladenosine(1618) in 23S rRNA + S-adenosyl-L-homocysteine + H(+). Functionally, specifically methylates the adenine in position 1618 of 23S rRNA. This is Ribosomal RNA large subunit methyltransferase F from Shewanella loihica (strain ATCC BAA-1088 / PV-4).